Here is a 922-residue protein sequence, read N- to C-terminus: Translation initiation factor IF-2 (922 aa).

Positions 33–310 (KTASSTVQPP…SKRQKRNEYE (278 aa)) are disordered. The segment covering 75–87 (PAAKAAPKAAAKP) has biased composition (low complexity). 2 stretches are compositionally biased toward pro residues: residues 88-98 (GPKPGPKPGPQ) and 140-150 (TPKPGAKPGPK). 2 stretches are compositionally biased toward low complexity: residues 151–169 (PGGA…GRAP) and 202–211 (PGSRPGGAKK). Composition is skewed to gly residues over residues 215–225 (KPGGAKQGGGR) and 248–292 (FGGG…GRPG). Basic residues predominate over residues 296–305 (RKGRKSKRQK). One can recognise a tr-type G domain in the interval 418 to 590 (QRPPVVTVMG…VLLTADASLD (173 aa)). The segment at 427 to 434 (GHVDHGKT) is G1. Residue 427–434 (GHVDHGKT) participates in GTP binding. A G2 region spans residues 452–456 (GITQH). The G3 stretch occupies residues 477–480 (DTPG). Residues 477-481 (DTPGH) and 531-534 (NKID) each bind GTP. A G4 region spans residues 531-534 (NKID). The G5 stretch occupies residues 567 to 569 (SAK).

This sequence belongs to the TRAFAC class translation factor GTPase superfamily. Classic translation factor GTPase family. IF-2 subfamily.

Its subcellular location is the cytoplasm. Its function is as follows. One of the essential components for the initiation of protein synthesis. Protects formylmethionyl-tRNA from spontaneous hydrolysis and promotes its binding to the 30S ribosomal subunits. Also involved in the hydrolysis of GTP during the formation of the 70S ribosomal complex. In Corynebacterium jeikeium (strain K411), this protein is Translation initiation factor IF-2.